The primary structure comprises 98 residues: NADH-ubiquinone oxidoreductase chain 4L (98 aa).

3 helical membrane passes run methionine 1–methionine 21, alanine 29–leucine 49, and isoleucine 61–valine 81.

Belongs to the complex I subunit 4L family. As to quaternary structure, core subunit of respiratory chain NADH dehydrogenase (Complex I) which is composed of 45 different subunits.

Its subcellular location is the mitochondrion inner membrane. It catalyses the reaction a ubiquinone + NADH + 5 H(+)(in) = a ubiquinol + NAD(+) + 4 H(+)(out). Core subunit of the mitochondrial membrane respiratory chain NADH dehydrogenase (Complex I) which catalyzes electron transfer from NADH through the respiratory chain, using ubiquinone as an electron acceptor. Part of the enzyme membrane arm which is embedded in the lipid bilayer and involved in proton translocation. The sequence is that of NADH-ubiquinone oxidoreductase chain 4L (MT-ND4L) from Eschrichtius robustus (California gray whale).